Reading from the N-terminus, the 124-residue chain is Large ribosomal subunit protein bL12 (124 aa).

Belongs to the bacterial ribosomal protein bL12 family. Homodimer. Part of the ribosomal stalk of the 50S ribosomal subunit. Forms a multimeric L10(L12)X complex, where L10 forms an elongated spine to which 2 to 4 L12 dimers bind in a sequential fashion. Binds GTP-bound translation factors.

Forms part of the ribosomal stalk which helps the ribosome interact with GTP-bound translation factors. Is thus essential for accurate translation. This Brucella abortus (strain S19) protein is Large ribosomal subunit protein bL12.